The following is a 204-amino-acid chain: High frequency lysogenization protein HflD homolog (204 aa).

Belongs to the HflD family.

Its subcellular location is the cytoplasm. It localises to the cell inner membrane. The polypeptide is High frequency lysogenization protein HflD homolog (Aeromonas hydrophila subsp. hydrophila (strain ATCC 7966 / DSM 30187 / BCRC 13018 / CCUG 14551 / JCM 1027 / KCTC 2358 / NCIMB 9240 / NCTC 8049)).